A 280-amino-acid polypeptide reads, in one-letter code: Nitrogenase iron protein (280 aa).

ATP is bound at residue 9–16 (GKGGIGKS). Cysteine 97 contributes to the [4Fe-4S] cluster binding site. At arginine 100 the chain carries ADP-ribosylarginine; by dinitrogenase reductase ADP-ribosyltransferase. Cysteine 132 is a [4Fe-4S] cluster binding site.

This sequence belongs to the NifH/BchL/ChlL family. In terms of assembly, homodimer. [4Fe-4S] cluster is required as a cofactor. The reversible ADP-ribosylation of Arg-100 inactivates the nitrogenase reductase and regulates nitrogenase activity.

It catalyses the reaction N2 + 8 reduced [2Fe-2S]-[ferredoxin] + 16 ATP + 16 H2O = H2 + 8 oxidized [2Fe-2S]-[ferredoxin] + 2 NH4(+) + 16 ADP + 16 phosphate + 6 H(+). In terms of biological role, the key enzymatic reactions in nitrogen fixation are catalyzed by the nitrogenase complex, which has 2 components: the iron protein and the molybdenum-iron protein. The chain is Nitrogenase iron protein from Desulforudis audaxviator (strain MP104C).